We begin with the raw amino-acid sequence, 632 residues long: Extracellular metalloproteinase 5 (632 aa).

A signal peptide spans 1–20 (MHGLLLAAGLLSLPLHVLAH). A propeptide spanning residues 21-244 (PQPGTSLAGR…HNVVDYVSHA (224 aa)) is cleaved from the precursor. A glycan (N-linked (GlcNAc...) asparagine) is linked at Asn284. His427 provides a ligand contact to Zn(2+). Residue Glu428 is part of the active site. His431 serves as a coordination point for Zn(2+). Residues Asn591 and Asn620 are each glycosylated (N-linked (GlcNAc...) asparagine).

The protein belongs to the peptidase M36 family. The cofactor is Zn(2+).

The protein resides in the secreted. In terms of biological role, secreted metalloproteinase probably acting as a virulence factor. This chain is Extracellular metalloproteinase 5 (MEP5), found in Arthroderma otae (strain ATCC MYA-4605 / CBS 113480) (Microsporum canis).